The chain runs to 531 residues: Tryptophan biosynthesis protein TRP1 (531 aa).

Residues 1–254 (MGNILEEIAA…TVKDLLQNVT (254 aa)) form an indole-3-glycerol phosphate synthase region. The tract at residues 255–531 (RHSESGEFAL…TLKIDEETEN (277 aa)) is N-(5'-phosphoribosyl)anthranilate isomerase.

In the N-terminal section; belongs to the TrpC family. This sequence in the C-terminal section; belongs to the TrpF family.

The catalysed reaction is N-(5-phospho-beta-D-ribosyl)anthranilate = 1-(2-carboxyphenylamino)-1-deoxy-D-ribulose 5-phosphate. It carries out the reaction 1-(2-carboxyphenylamino)-1-deoxy-D-ribulose 5-phosphate + H(+) = (1S,2R)-1-C-(indol-3-yl)glycerol 3-phosphate + CO2 + H2O. It participates in amino-acid biosynthesis; L-tryptophan biosynthesis; L-tryptophan from chorismate: step 3/5. Its pathway is amino-acid biosynthesis; L-tryptophan biosynthesis; L-tryptophan from chorismate: step 4/5. In terms of biological role, bifunctional enzyme that catalyzes two sequential steps of tryptophan biosynthetic pathway. The polypeptide is Tryptophan biosynthesis protein TRP1 (TRP1) (Phytophthora nicotianae (Potato buckeye rot agent)).